A 499-amino-acid chain; its full sequence is Bifunctional purine biosynthesis protein PurH (499 aa).

In terms of domain architecture, MGS-like spans 1 to 144 (MIKRALISVF…KNFKDVVVLT (144 aa)).

Belongs to the PurH family.

The catalysed reaction is (6R)-10-formyltetrahydrofolate + 5-amino-1-(5-phospho-beta-D-ribosyl)imidazole-4-carboxamide = 5-formamido-1-(5-phospho-D-ribosyl)imidazole-4-carboxamide + (6S)-5,6,7,8-tetrahydrofolate. It carries out the reaction IMP + H2O = 5-formamido-1-(5-phospho-D-ribosyl)imidazole-4-carboxamide. It functions in the pathway purine metabolism; IMP biosynthesis via de novo pathway; 5-formamido-1-(5-phospho-D-ribosyl)imidazole-4-carboxamide from 5-amino-1-(5-phospho-D-ribosyl)imidazole-4-carboxamide (10-formyl THF route): step 1/1. It participates in purine metabolism; IMP biosynthesis via de novo pathway; IMP from 5-formamido-1-(5-phospho-D-ribosyl)imidazole-4-carboxamide: step 1/1. In Clostridium botulinum (strain 657 / Type Ba4), this protein is Bifunctional purine biosynthesis protein PurH.